A 172-amino-acid chain; its full sequence is C-phycocyanin beta subunit (172 aa).

Asn-72 is modified (N4-methylasparagine). (2R,3E)-phycocyanobilin is bound by residues Cys-82 and Cys-153.

Belongs to the phycobiliprotein family. In terms of assembly, heterodimer of an alpha and a beta chain, which further assembles into trimers. The trimers assemble into hexamers, although these were not seen in the crystallographic studies. Part of 2 PBS rod complexes, the conventional CpcG-PBS rod and a photosystem I-specific CpcL-PBS rod, both of which include ferredoxin--NADP reductase (petH). Interacts with rod linker CpcC2 via the latter's N-terminal PBS-linker domain. Contains two covalently linked bilin chromophores.

The protein resides in the cellular thylakoid membrane. Light-harvesting photosynthetic bile pigment-protein from the phycobiliprotein complex (phycobilisome, PBS). Phycocyanin is the major phycobiliprotein in the PBS rod. The sequence is that of C-phycocyanin beta subunit (cpcB) from Synechocystis sp. (strain ATCC 27184 / PCC 6803 / Kazusa).